We begin with the raw amino-acid sequence, 905 residues long: MKSKEIRNKWLNFFESKGHLIIPSKSLIPIKDDSLLWINSGVATLKDFFSGKKIPPSKRLTNSQKSIRTNDIENVGKTARHHTFFEMLGNFSIGDYFKKEAINFGFEFIFDVLKFDREKIFFTYFSEDLETLEILKSLNVPDSQIIKGSRKTNFWDMGNGPCGPNLEIFYDRGPKYSNRGIELLKNDIENDRYIEIWNIVFSQFNNDGNGNYELLKQKNIDTGAGLERLACILQDTPTNFETDLFLPIIKEIEKLSIYKYKIDNYFLKDKIQEKINLNFKIISDHLRTAVNAINDGAKPSNNGRGYIIRRLIRRAYRSGIFLGIKGKSFLHKMTQIVRDSLIYDIDVEKVSKIIKKEEEMFSKTISEGINLLKEKIKSKFPKDNSIDIENKSQVAKYFKENNLTFDFSIAFELFSTFGFPVEIIKEILEDEYEIELDISNLPKYLEEHANKSRSENSSAMQKVINSLELVKEKVSEFVGYSTLKTKSKILYLLNETEEIHFTNSENEISYLILDKTPFYATAGGQRHDKGLLIQDKNRIEVLEVFKDKHLNNVHKVKGKILKSELINAEVDSNIRIGLERNHSGTHLVFNALSREFGKEIEQLGSDNNEERLTFDFPLSKKPSWEEIKNVEKRVNEYINMSVDREYIITTLEGAKKLNAVMTLEEQEYMDPNEVRIVNFPKITADLCGGTHIENTKKIETFKIISLDSKGKNKFRIKAITSKKIVEEYLKDEISKNKLVLENLIEKNKSLFQGYKMNFSWSKNLDEQNEQITKHIDQARSDYKKLLKNSENKLEKLESDFSIMKFKNTEIIFDMNLKMASLQSLVATLREKNPKAIVILGSEISKGKFFICVGSKEFSAKDISNIIFEKYKGKGGGNNILSQGSIDKKIEKAEDLFELLKEKGII.

Residues His582, His586, Cys687, and His691 each coordinate Zn(2+).

This sequence belongs to the class-II aminoacyl-tRNA synthetase family. Zn(2+) is required as a cofactor.

The protein localises to the cytoplasm. It carries out the reaction tRNA(Ala) + L-alanine + ATP = L-alanyl-tRNA(Ala) + AMP + diphosphate. In terms of biological role, catalyzes the attachment of alanine to tRNA(Ala) in a two-step reaction: alanine is first activated by ATP to form Ala-AMP and then transferred to the acceptor end of tRNA(Ala). Also edits incorrectly charged Ser-tRNA(Ala) and Gly-tRNA(Ala) via its editing domain. The polypeptide is Alanine--tRNA ligase (Mycoplasma mobile (strain ATCC 43663 / 163K / NCTC 11711) (Mesomycoplasma mobile)).